We begin with the raw amino-acid sequence, 98 residues long: Large ribosomal subunit protein uL23 (98 aa).

It belongs to the universal ribosomal protein uL23 family. Part of the 50S ribosomal subunit. Contacts protein L29, and trigger factor when it is bound to the ribosome.

Its function is as follows. One of the early assembly proteins it binds 23S rRNA. One of the proteins that surrounds the polypeptide exit tunnel on the outside of the ribosome. Forms the main docking site for trigger factor binding to the ribosome. This chain is Large ribosomal subunit protein uL23, found in Rickettsia africae (strain ESF-5).